Consider the following 195-residue polypeptide: dITP/XTP pyrophosphatase (195 aa).

8 to 13 (SNNQGK) serves as a coordination point for substrate. Residues Glu-39 and Asp-68 each contribute to the Mg(2+) site. Residue Asp-68 is the Proton acceptor of the active site. Substrate is bound by residues Ser-69, 149–152 (FGYD), Lys-172, and 177–178 (HR).

Belongs to the HAM1 NTPase family. In terms of assembly, homodimer. The cofactor is Mg(2+).

It carries out the reaction XTP + H2O = XMP + diphosphate + H(+). The catalysed reaction is dITP + H2O = dIMP + diphosphate + H(+). The enzyme catalyses ITP + H2O = IMP + diphosphate + H(+). Pyrophosphatase that catalyzes the hydrolysis of nucleoside triphosphates to their monophosphate derivatives, with a high preference for the non-canonical purine nucleotides XTP (xanthosine triphosphate), dITP (deoxyinosine triphosphate) and ITP. Seems to function as a house-cleaning enzyme that removes non-canonical purine nucleotides from the nucleotide pool, thus preventing their incorporation into DNA/RNA and avoiding chromosomal lesions. The sequence is that of dITP/XTP pyrophosphatase from Staphylococcus aureus (strain COL).